The chain runs to 224 residues: MLTHEISENEKPREKLQNYGIEALSSSELVALIIETGTKNESVLTIANRIIMKFKNVGEMQYASIEEFQLVNGIGIAKASKIMAAIELGRRISIVTEQEEVVVRCPEDAVKLVMPELAFLFQEHFHCLFLNTKNQVIYRQTIFVGGLNASIVHPREVFRLALRKSAASIMCFHNHPSGDPTPSSEDLLVTKRLAEAGNIVGITLLDHIIIGKNKYISLKEKGYF.

Residues 102–224 (VVRCPEDAVK…YISLKEKGYF (123 aa)) enclose the MPN domain. Zn(2+) is bound by residues His173, His175, and Asp186. The JAMM motif motif lies at 173–186 (HNHPSGDPTPSSED).

It belongs to the UPF0758 family.

The chain is UPF0758 protein lmo1549 from Listeria monocytogenes serovar 1/2a (strain ATCC BAA-679 / EGD-e).